We begin with the raw amino-acid sequence, 459 residues long: Exodeoxyribonuclease 7 large subunit (459 aa).

Belongs to the XseA family. Heterooligomer composed of large and small subunits.

It is found in the cytoplasm. It carries out the reaction Exonucleolytic cleavage in either 5'- to 3'- or 3'- to 5'-direction to yield nucleoside 5'-phosphates.. In terms of biological role, bidirectionally degrades single-stranded DNA into large acid-insoluble oligonucleotides, which are then degraded further into small acid-soluble oligonucleotides. The polypeptide is Exodeoxyribonuclease 7 large subunit (Yersinia pseudotuberculosis serotype IB (strain PB1/+)).